The primary structure comprises 527 residues: Glutamyl-tRNA reductase 1, chloroplastic (527 aa).

A chloroplast-targeting transit peptide spans 1–43 (MAGATSATAAAGAFAAAKARGPAAACPWLVAAGGRRRSGVVRC). Substrate-binding positions include 124-127 (TCNR), Ser-184, 189-191 (EGQ), and Gln-195. Catalysis depends on Cys-125, which acts as the Nucleophile. Residue 266–271 (GAGKMG) coordinates NADP(+).

The protein belongs to the glutamyl-tRNA reductase family. In terms of assembly, homodimer.

It is found in the plastid. It localises to the chloroplast. It catalyses the reaction (S)-4-amino-5-oxopentanoate + tRNA(Glu) + NADP(+) = L-glutamyl-tRNA(Glu) + NADPH + H(+). The protein operates within porphyrin-containing compound metabolism; protoporphyrin-IX biosynthesis; 5-aminolevulinate from L-glutamyl-tRNA(Glu): step 1/2. Its function is as follows. Catalyzes the NADPH-dependent reduction of glutamyl-tRNA(Glu) to glutamate 1-semialdehyde (GSA). In Hordeum vulgare (Barley), this protein is Glutamyl-tRNA reductase 1, chloroplastic (HEMA1).